A 144-amino-acid chain; its full sequence is Large ribosomal subunit protein uL15 (144 aa).

Over residues 1-18 (MRLNDLHPAEGSRPEGKR) the composition is skewed to basic and acidic residues. The interval 1–58 (MRLNDLHPAEGSRPEGKRVGRGIGSGLGKTGGRGHKGQKSRSGGSVKPGFEGGQMPLQ) is disordered. Gly residues predominate over residues 21 to 31 (RGIGSGLGKTG).

It belongs to the universal ribosomal protein uL15 family. Part of the 50S ribosomal subunit.

Binds to the 23S rRNA. The chain is Large ribosomal subunit protein uL15 from Alcanivorax borkumensis (strain ATCC 700651 / DSM 11573 / NCIMB 13689 / SK2).